A 247-amino-acid polypeptide reads, in one-letter code: Cell division protein ZapD (247 aa).

Belongs to the ZapD family. Interacts with FtsZ.

Its subcellular location is the cytoplasm. In terms of biological role, cell division factor that enhances FtsZ-ring assembly. Directly interacts with FtsZ and promotes bundling of FtsZ protofilaments, with a reduction in FtsZ GTPase activity. This is Cell division protein ZapD from Shigella sonnei (strain Ss046).